The sequence spans 160 residues: Envelope glycoprotein L (160 aa).

The N-terminal stretch at Met-1–Cys-22 is a signal peptide. Residues His-24–Trp-149 form an interaction with gH region. Positions Asp-28–Gln-160 constitute a gL alphaherpesvirus-type domain. Intrachain disulfides connect Cys-49–Cys-80 and Cys-147–Cys-159.

The protein belongs to the herpesviridae glycoprotein L (gL) family. Alphaherpesvirinae gL subfamily. In terms of assembly, interacts with glycoprotein H (gH); this interaction is necessary for the correct processing and cell surface expression of gH. The heterodimer gH/gL seems to interact with gB trimers during fusion.

It is found in the virion membrane. The protein localises to the host cell membrane. It localises to the host Golgi apparatus. The protein resides in the host trans-Golgi network. Its function is as follows. The heterodimer glycoprotein H-glycoprotein L is required for the fusion of viral and plasma membranes leading to virus entry into the host cell. Acts as a functional inhibitor of gH and maintains gH in an inhibited form. Upon binding to host integrins, gL dissociates from gH leading to activation of the viral fusion glycoproteins gB and gH. The chain is Envelope glycoprotein L from Varicella-zoster virus (strain Oka vaccine) (HHV-3).